We begin with the raw amino-acid sequence, 38 residues long: Photosystem II reaction center protein L (38 aa).

The chain crosses the membrane as a helical span at residues 17–37; it reads SLYWGLLLMFVLAVLFSSYFF.

The protein belongs to the PsbL family. As to quaternary structure, PSII is composed of 1 copy each of membrane proteins PsbA, PsbB, PsbC, PsbD, PsbE, PsbF, PsbH, PsbI, PsbJ, PsbK, PsbL, PsbM, PsbT, PsbX, PsbY, PsbZ, Psb30/Ycf12, at least 3 peripheral proteins of the oxygen-evolving complex and a large number of cofactors. It forms dimeric complexes.

It localises to the plastid. The protein localises to the chloroplast thylakoid membrane. Its function is as follows. One of the components of the core complex of photosystem II (PSII). PSII is a light-driven water:plastoquinone oxidoreductase that uses light energy to abstract electrons from H(2)O, generating O(2) and a proton gradient subsequently used for ATP formation. It consists of a core antenna complex that captures photons, and an electron transfer chain that converts photonic excitation into a charge separation. This subunit is found at the monomer-monomer interface and is required for correct PSII assembly and/or dimerization. The sequence is that of Photosystem II reaction center protein L from Emiliania huxleyi (Coccolithophore).